The chain runs to 518 residues: Retinal dehydrogenase 2 (518 aa).

Position 168 is a phosphotyrosine (Tyr-168). Residues Ile-184–Trp-186, Lys-210–Glu-213, and Ser-264–Glu-266 each bind NAD(+). The Proton acceptor role is filled by Glu-286. Cys-320 serves as the catalytic Nucleophile. A Phosphoserine modification is found at Ser-351. Residues Lys-366–Lys-370 and Glu-417 contribute to the NAD(+) site.

Belongs to the aldehyde dehydrogenase family. Homotetramer. Found in testis and less abundantly in lung, brain, heart, liver and kidney.

The protein resides in the cytoplasm. The catalysed reaction is retinal + NAD(+) + H2O = retinoate + NADH + 2 H(+). It carries out the reaction all-trans-retinal + NAD(+) + H2O = all-trans-retinoate + NADH + 2 H(+). It catalyses the reaction all-trans-13,14-dihydroretinal + NAD(+) + H2O = all-trans-13,14-dihydroretinoate + NADH + 2 H(+). It participates in cofactor metabolism; retinol metabolism. Functionally, catalyzes the NAD-dependent oxidation of aldehyde substrates, such as all-trans-retinal and all-trans-13,14-dihydroretinal, to their corresponding carboxylic acids, all-trans-retinoate and all-trans-13,14-dihydroretinoate, respectively. Retinoate signaling is critical for the transcriptional control of many genes, for instance it is crucial for initiation of meiosis in both male and female. Recognizes retinal as substrate, both in its free form and when bound to cellular retinol-binding protein. Lacks activity with benzaldehyde, acetaldehyde and octanal. Displays complete lack of activity with citral. The polypeptide is Retinal dehydrogenase 2 (Aldh1a2) (Rattus norvegicus (Rat)).